A 435-amino-acid polypeptide reads, in one-letter code: 3-ketoacyl-CoA thiolase (435 aa).

Cysteine 98 (acyl-thioester intermediate) is an active-site residue. Residues histidine 391 and cysteine 421 each act as proton acceptor in the active site.

This sequence belongs to the thiolase-like superfamily. Thiolase family. Heterotetramer of two alpha chains (FadJ) and two beta chains (FadI).

It is found in the cytoplasm. The enzyme catalyses an acyl-CoA + acetyl-CoA = a 3-oxoacyl-CoA + CoA. It participates in lipid metabolism; fatty acid beta-oxidation. Its function is as follows. Catalyzes the final step of fatty acid oxidation in which acetyl-CoA is released and the CoA ester of a fatty acid two carbons shorter is formed. In Vibrio cholerae serotype O1 (strain ATCC 39315 / El Tor Inaba N16961), this protein is 3-ketoacyl-CoA thiolase.